The following is a 618-amino-acid chain: Methylmalonyl-CoA mutase small subunit (618 aa).

It belongs to the methylmalonyl-CoA mutase family. As to quaternary structure, heterodimer of an alpha and a beta chain. Adenosylcob(III)alamin is required as a cofactor.

The catalysed reaction is (R)-methylmalonyl-CoA = succinyl-CoA. It participates in metabolic intermediate metabolism; propanoyl-CoA degradation; succinyl-CoA from propanoyl-CoA: step 3/3. In terms of biological role, catalyzes the isomerization of succinyl-CoA to methylmalonyl-CoA during synthesis of propionate from tricarboxylic acid-cycle intermediates. In Porphyromonas gingivalis (strain ATCC BAA-308 / W83), this protein is Methylmalonyl-CoA mutase small subunit (mutA).